The chain runs to 246 residues: Ureidoacrylate amidohydrolase RutB (246 aa).

A disordered region spans residues 1–27; the sequence is MSAVTAAGYQAPQERSQSVTLPARPEP. The active-site Proton acceptor is the Asp-41. The active site involves Lys-150. The active-site Nucleophile is Cys-183.

Belongs to the isochorismatase family. RutB subfamily.

The catalysed reaction is (Z)-3-ureidoacrylate + H2O + H(+) = (Z)-3-aminoacrylate + NH4(+) + CO2. The enzyme catalyses (Z)-3-ureidoacrylate + H2O = (Z)-3-aminoacrylate + carbamate + H(+). It catalyses the reaction (Z)-2-methylureidoacrylate + H2O + H(+) = (Z)-2-methylaminoacrylate + NH4(+) + CO2. Its function is as follows. Hydrolyzes ureidoacrylate to form aminoacrylate and carbamate. The carbamate hydrolyzes spontaneously, thereby releasing one of the nitrogen atoms of the pyrimidine ring as ammonia and one of its carbon atoms as CO2. The protein is Ureidoacrylate amidohydrolase RutB of Rhizobium rhizogenes (strain K84 / ATCC BAA-868) (Agrobacterium radiobacter).